Here is a 293-residue protein sequence, read N- to C-terminus: Elongation factor Ts (293 aa).

The segment at 79-82 is involved in Mg(2+) ion dislocation from EF-Tu; sequence TDFV.

Belongs to the EF-Ts family.

It localises to the cytoplasm. In terms of biological role, associates with the EF-Tu.GDP complex and induces the exchange of GDP to GTP. It remains bound to the aminoacyl-tRNA.EF-Tu.GTP complex up to the GTP hydrolysis stage on the ribosome. The sequence is that of Elongation factor Ts (tsf) from Halalkalibacterium halodurans (strain ATCC BAA-125 / DSM 18197 / FERM 7344 / JCM 9153 / C-125) (Bacillus halodurans).